Reading from the N-terminus, the 284-residue chain is 4-hydroxy-3-methylbut-2-enyl diphosphate reductase (284 aa).

Cys-12 is a [4Fe-4S] cluster binding site. His-40 and His-72 together coordinate (2E)-4-hydroxy-3-methylbut-2-enyl diphosphate. 2 residues coordinate dimethylallyl diphosphate: His-40 and His-72. His-40 and His-72 together coordinate isopentenyl diphosphate. Cys-94 is a [4Fe-4S] cluster binding site. A (2E)-4-hydroxy-3-methylbut-2-enyl diphosphate-binding site is contributed by His-122. Dimethylallyl diphosphate is bound at residue His-122. His-122 lines the isopentenyl diphosphate pocket. Glu-124 functions as the Proton donor in the catalytic mechanism. Residue Thr-161 participates in (2E)-4-hydroxy-3-methylbut-2-enyl diphosphate binding. Residue Cys-193 participates in [4Fe-4S] cluster binding. (2E)-4-hydroxy-3-methylbut-2-enyl diphosphate-binding residues include Ser-221, Asn-223, and Ser-264. The dimethylallyl diphosphate site is built by Ser-221, Asn-223, and Ser-264. Isopentenyl diphosphate-binding residues include Ser-221, Asn-223, and Ser-264.

This sequence belongs to the IspH family. Requires [4Fe-4S] cluster as cofactor.

It catalyses the reaction isopentenyl diphosphate + 2 oxidized [2Fe-2S]-[ferredoxin] + H2O = (2E)-4-hydroxy-3-methylbut-2-enyl diphosphate + 2 reduced [2Fe-2S]-[ferredoxin] + 2 H(+). It carries out the reaction dimethylallyl diphosphate + 2 oxidized [2Fe-2S]-[ferredoxin] + H2O = (2E)-4-hydroxy-3-methylbut-2-enyl diphosphate + 2 reduced [2Fe-2S]-[ferredoxin] + 2 H(+). The protein operates within isoprenoid biosynthesis; dimethylallyl diphosphate biosynthesis; dimethylallyl diphosphate from (2E)-4-hydroxy-3-methylbutenyl diphosphate: step 1/1. It participates in isoprenoid biosynthesis; isopentenyl diphosphate biosynthesis via DXP pathway; isopentenyl diphosphate from 1-deoxy-D-xylulose 5-phosphate: step 6/6. Functionally, catalyzes the conversion of 1-hydroxy-2-methyl-2-(E)-butenyl 4-diphosphate (HMBPP) into a mixture of isopentenyl diphosphate (IPP) and dimethylallyl diphosphate (DMAPP). Acts in the terminal step of the DOXP/MEP pathway for isoprenoid precursor biosynthesis. The chain is 4-hydroxy-3-methylbut-2-enyl diphosphate reductase from Dehalococcoides mccartyi (strain ATCC BAA-2266 / KCTC 15142 / 195) (Dehalococcoides ethenogenes (strain 195)).